The primary structure comprises 208 residues: Thymidylate kinase (208 aa).

An ATP-binding site is contributed by 7–14 (GIDGSGKS).

This sequence belongs to the thymidylate kinase family.

It carries out the reaction dTMP + ATP = dTDP + ADP. Its function is as follows. Phosphorylation of dTMP to form dTDP in both de novo and salvage pathways of dTTP synthesis. The polypeptide is Thymidylate kinase (Kosmotoga olearia (strain ATCC BAA-1733 / DSM 21960 / TBF 19.5.1)).